The primary structure comprises 391 residues: MEQREEKTENIQRKRSRGKSSSSSLPLDLTSEIFSRLPAKSVVRFRCVSKLWSSITTAPYFTNSFETRPNLMFFFKEGDKFFVFTIPQHNQNPNESYSYSSSEIIDSYHTTYPKRCCVTTLTESVHGLICFRKAATPIIWNPTMRKFKPLRKLDERWKNIKVSLGYDPVDGKHKVVCMPYGNAFYECRVLTLGSDQEWRTVKTNHKNSPFTFHGGVCYRQSRCINGVIYYRADTNSGRVILSFDVRSERFDVIELPWDENFGLVMMMSYKGRLACLGFNHEKNSRSMWVLENVEQREWSCHTYLPISHYEPGLENYFNLTGITNDGELIYVPNTVLERFHVIYFDAIRETFRRVIYKGVADKGFRLRNGLEDKPIRRLHFFPNHIETLMSL.

A compositionally biased stretch (basic and acidic residues) spans methionine 1–glutamine 12. Positions methionine 1–leucine 25 are disordered. Residues lysine 19–arginine 68 form the F-box domain.

The protein is Putative F-box protein At1g47730 of Arabidopsis thaliana (Mouse-ear cress).